The chain runs to 1707 residues: MANGNFKLSQLLNVDEMSAEQRSHFFDLMLTKPDCEIGQMMQRVVVDKVDDMIRERKTKDPVIVHEVLSQKEQNKLMEIYPEFNIVFKDDKNMVHGFAAAERKLQALLLLDRVPALQEVDDIGGQWSFWVTRGEKRIHSCCPNLDIRDDQREISRQIFLTAIGDQARSGKRQMSENELWMYDQFRKNIAAPNAVRCNNTYQGCTCRGFSDGKKKGAQYAIALHSLYDFKLKDLMATMVEKKTKVVHAAMLFAPESMLVDEGPLPSVDGYYMKKNGKIYFGFEKDPSFSYIHDWEEYKKYLLGKPVSYQGNVFYFEPWQVRGDTMLFSIYRIAGVPRRSLSSQEYYRRIYISRWENMVVVPIFDLVESTRELVKKDLFVEKQFMDKCLDYIARLSDQQLTISNVKSYLSSNNWVLFINGAAVKNKQSVDSRDLQLLAQTLLVKEQVARPVMRELREAILTETKPITSLTDVLGLISRKLWKQFANKIAVGGFVGMVGTLIGFYPKKVLTWAKDTPNGPELCYENSHKTKVIVFLSVVYAIGGITLMRRDIRDGLVKKLCDMFDIKRGAHVLDVENPCRYYEINDFFSSLYSASESGETVLPDLSEVKAKSDKLLQQKKEIADEFLSAKFSNYSGSSVRTSPPSVVGSSRSGLGLLLEDSNVLTQARVGVSRKVDDEEIMEQFLSGLIDTEAEIDEVVSAFSAECERGETSGTKVLCKPLTPPGFENVLPAVKPLVSKGKTVKRVDYFQVMGGERLPKRPVVSGDNSVDARREFLYYLDAERVAQNDEIMSLYRDYSRGVIRTGGQNYPHGLGVWDVEMKNWCIRPVVTEHAYVFQPDKRMDDWSGYLEVAVWERGMLVNDFAVERMSDYVIVCDQTYLCNNRLILDNLSALDLGPVNCSFELVDGVPGCGKSTMIVNSANPCVDVVLSTGRAATDDLIERFASKGFPCKLKRRVKTVDSFLMHCVDGSLTGDVLHFDEALMAHAGMVYFCAQIAGAKRCICQGDQNQISFKPRVSQVDLRFSSLVGKFDIVTEKRETYRSPADVAAVLNKYYTGDVRTHNATANSMTVRKIVSKEQVSLKPGAQYITFLQSEKKELVNLLALRKVAAKVSTVHESQGETFKDVVLVRTKPTDDSIARGREYLIVALSRHTQSLVYETVKEDDVSKEIRESAALTKAALARFFVTETVLXRFRSRFDVFRHHEGPCAVPDSGTITDLEMWYDALFPGNSLRDSSLDGYLVATTDCNLRLDNVTIKSGNWKDKFAEKETFLKPVIRTAMPDKRKTTQLESLLALQKRNQAAPDLQENVHATVLIEETMKKLKSVVYDVGKIRADPIVNRAQMERWWRNQSTAVQAKVVADVRELHEIDYSSYMYMIKSDVKPKTDLTPQFEYSALQTVVYHEKLINSLFGPIFKEINERKLDAMQPHFVFNTRMTSSDLNDRVKFLNTEAAYDFVEIDMSKFDKSANRFHLQLQLEIYRLFGLDEWAAFLWEVSHTQTTVRDIQNGMMAHIWYQQKSGDADTYNANSDRTLCALLSELPLEKAVMVTYGGDDSLIAFPRGTQFVDPCPKLATKWNFECKIFKYDVPMFCGKFLLKTSSCYEFVPDPVKVLTKLGKKSIKDVQHLAEIYISLNDSNRALGNYMVVSKLSESVSDRYLYKGDSVHALCALWKHIKSFTALCTLFRDENDKELNPAKVDWKKAQRAVSNFYDW.

Residues 65-425 are methyltransferase; that stretch reads HEVLSQKEQN…INGAAVKNKQ (361 aa). An Alphavirus-like MT domain is found at 86-300; it reads VFKDDKNMVH…HDWEEYKKYL (215 aa). A coiled-coil region spans residues 601 to 622; sequence DLSEVKAKSDKLLQQKKEIADE. The region spanning 872–1033 is the (+)RNA virus helicase ATP-binding domain; sequence CDQTYLCNNR…VGKFDIVTEK (162 aa). Residues 901 to 1155 form a helicase region; the sequence is LVDGVPGCGK…SRHTQSLVYE (255 aa). The (+)RNA virus helicase C-terminal domain maps to 1034 to 1187; it reads RETYRSPADV…ARFFVTETVL (154 aa). Positions 1449 to 1562 constitute a RdRp catalytic domain; that stretch reads YDFVEIDMSK…AFPRGTQFVD (114 aa).

Belongs to the ssRNA positive-strand viruses RNA-directed RNA polymerase family. In terms of assembly, heterodimer of a large and a small subunit.

The enzyme catalyses ATP + H2O = ADP + phosphate + H(+). The catalysed reaction is RNA(n) + a ribonucleoside 5'-triphosphate = RNA(n+1) + diphosphate. Functionally, is an RNA-dependent RNA polymerase active in viral RNA replication. Its function is as follows. Is a methyltransferase active in RNA capping and an RNA helicase. Methyltransferase displays a cytoplasmic capping enzyme activity. This function is necessary since all viral RNAs are synthesized in the cytoplasm, and host capping enzymes are restricted to the nucleus. Helicase region probably exhibits NTPase and RNA unwinding activities (Potential). This Beta vulgaris (Sugar beet) protein is Replicase large subunit.